Consider the following 95-residue polypeptide: Small ribosomal subunit protein uS15 (95 aa).

Belongs to the universal ribosomal protein uS15 family. Part of the 30S ribosomal subunit. Forms a bridge to the 50S subunit in the 70S ribosome, contacting the 23S rRNA.

In terms of biological role, one of the primary rRNA binding proteins, it binds directly to 16S rRNA where it helps nucleate assembly of the platform of the 30S subunit by binding and bridging several RNA helices of the 16S rRNA. Its function is as follows. Forms an intersubunit bridge (bridge B4) with the 23S rRNA of the 50S subunit in the ribosome. The polypeptide is Small ribosomal subunit protein uS15 (Streptomyces avermitilis (strain ATCC 31267 / DSM 46492 / JCM 5070 / NBRC 14893 / NCIMB 12804 / NRRL 8165 / MA-4680)).